We begin with the raw amino-acid sequence, 240 residues long: 14-3-3 protein 3 (240 aa).

Belongs to the 14-3-3 family. As to quaternary structure, interacts with coactosin. Interacts with ACTO/actophorin.

It is found in the cytoplasm. Its subcellular location is the cell projection. The protein localises to the phagocytic cup. Adapter protein which is required for phagocytosis and motility, probably by regulating actin cytoskeleton dynamics. During phagocytosis, plays a role in the initiation and/or formation of the phagocytic cup and is involved in the recruitment of the actin binding protein coactosin to the phagocytic cup. The sequence is that of 14-3-3 protein 3 from Entamoeba histolytica (strain ATCC 30459 / HM-1:IMSS / ABRM).